The primary structure comprises 182 residues: Nucleoside triphosphate/diphosphate phosphatase (182 aa).

The active-site Proton donor is the R27. The Mg(2+) site is built by N91, D107, D109, D111, D124, and E127.

It belongs to the Ntdp family. Requires Mg(2+) as cofactor.

It carries out the reaction a ribonucleoside 5'-triphosphate + H2O = a ribonucleoside 5'-diphosphate + phosphate + H(+). The enzyme catalyses a ribonucleoside 5'-diphosphate + H2O = a ribonucleoside 5'-phosphate + phosphate + H(+). Functionally, has nucleoside phosphatase activity towards nucleoside triphosphates and nucleoside diphosphates. The sequence is that of Nucleoside triphosphate/diphosphate phosphatase from Lactiplantibacillus plantarum (strain ATCC BAA-793 / NCIMB 8826 / WCFS1) (Lactobacillus plantarum).